The chain runs to 513 residues: TRAF3-interacting JNK-activating modulator (513 aa).

3 disordered regions span residues 1–96 (MISS…GQVS), 130–171 (SSGI…KAEE), and 381–402 (SLQGDGEQQSSETQDLQDQLKK). Residues 1 to 485 (MISSDSRSSP…QLQVKENELQ (485 aa)) are Cytoplasmic-facing. Composition is skewed to basic and acidic residues over residues 17–31 (ESYEAKCERRQETRE) and 69–79 (RNLEEEKKGQA). A coiled-coil region spans residues 266–488 (MKKVLLEMED…VKENELQCGQ (223 aa)). Residues 386–397 (GEQQSSETQDLQ) are compositionally biased toward polar residues. The helical; Anchor for type IV membrane protein transmembrane segment at 486-506 (CGQWLPVLMVVIATALAVFLA) threads the bilayer. The Extracellular portion of the chain corresponds to 507 to 513 (NKGNLVI).

In terms of assembly, interacts (via its coiled-coil domain) with TRAF3 (via isoleucine zipper). Interacts with MAP2K1. Interacts with PPP2CA; this interaction targets PPP2CA to the lysosomes. Interacts with MAVS. Interacts with TBK1. In terms of tissue distribution, expressed in bone marrow, spleen and thymus. Not detected in heart, kidney and liver.

Its subcellular location is the cell membrane. It is found in the golgi apparatus membrane. The protein localises to the lysosome membrane. The protein resides in the mitochondrion outer membrane. In terms of biological role, adapter protein that plays essential roles in both innate and adaptive immunity. Plays a crucial role in the regulation of thymocyte development. Mechanistically, mediates TCR-stimulated activation through recruiting MAP2K1/MEK1 to the Golgi and, thereby, facilitating the interaction of MAP2K1/MEK1 with its activator BRAF. Also plays an essential role in regulatory T-cell stability and function by recruiting the serine-threonine phosphatase catalytic subunit (PPP2CA) to the lysosome, thereby facilitating the interaction of PP2Ac with the mTORC1 component RPTOR and restricting glycolytic metabolism. Positively regulates TLR4 signaling activity in macrophage-mediated inflammation by acting as a molecular clamp to facilitate LPS-induced translocation of TLR4 to lipid rafts. In response to viral infection, facilitates the recruitment of TRAF3 to MAVS within mitochondria leading to IRF3 activation and interferon production. However, participates in the maintenance of immune homeostasis and the prevention of overzealous innate immunity by promoting 'Lys-48'-dependent ubiquitination of TBK1. This Mus musculus (Mouse) protein is TRAF3-interacting JNK-activating modulator (Traf3ip3).